Reading from the N-terminus, the 252-residue chain is Thiazole synthase (252 aa).

K91 acts as the Schiff-base intermediate with DXP in catalysis. Residues G152, A179–G180, and N201–T202 each bind 1-deoxy-D-xylulose 5-phosphate.

This sequence belongs to the ThiG family. In terms of assembly, homotetramer. Forms heterodimers with either ThiH or ThiS.

Its subcellular location is the cytoplasm. It carries out the reaction [ThiS sulfur-carrier protein]-C-terminal-Gly-aminoethanethioate + 2-iminoacetate + 1-deoxy-D-xylulose 5-phosphate = [ThiS sulfur-carrier protein]-C-terminal Gly-Gly + 2-[(2R,5Z)-2-carboxy-4-methylthiazol-5(2H)-ylidene]ethyl phosphate + 2 H2O + H(+). The protein operates within cofactor biosynthesis; thiamine diphosphate biosynthesis. In terms of biological role, catalyzes the rearrangement of 1-deoxy-D-xylulose 5-phosphate (DXP) to produce the thiazole phosphate moiety of thiamine. Sulfur is provided by the thiocarboxylate moiety of the carrier protein ThiS. In vitro, sulfur can be provided by H(2)S. The sequence is that of Thiazole synthase from Gluconobacter oxydans (strain 621H) (Gluconobacter suboxydans).